The chain runs to 297 residues: Formamidopyrimidine-DNA glycosylase (297 aa).

P2 functions as the Schiff-base intermediate with DNA in the catalytic mechanism. E3 (proton donor) is an active-site residue. K58 functions as the Proton donor; for beta-elimination activity in the catalytic mechanism. H106, R133, and R178 together coordinate DNA. The FPG-type zinc-finger motif lies at 263-297; the sequence is FVYDRAGEPCRICGTPIRQILQGQRSTFYCPHCQH. The active-site Proton donor; for delta-elimination activity is R287.

It belongs to the FPG family. As to quaternary structure, monomer. Zn(2+) is required as a cofactor.

It carries out the reaction Hydrolysis of DNA containing ring-opened 7-methylguanine residues, releasing 2,6-diamino-4-hydroxy-5-(N-methyl)formamidopyrimidine.. The enzyme catalyses 2'-deoxyribonucleotide-(2'-deoxyribose 5'-phosphate)-2'-deoxyribonucleotide-DNA = a 3'-end 2'-deoxyribonucleotide-(2,3-dehydro-2,3-deoxyribose 5'-phosphate)-DNA + a 5'-end 5'-phospho-2'-deoxyribonucleoside-DNA + H(+). Its function is as follows. Involved in base excision repair of DNA damaged by oxidation or by mutagenic agents. Acts as a DNA glycosylase that recognizes and removes damaged bases. Has a preference for oxidized purines, such as 7,8-dihydro-8-oxoguanine (8-oxoG). Has AP (apurinic/apyrimidinic) lyase activity and introduces nicks in the DNA strand. Cleaves the DNA backbone by beta-delta elimination to generate a single-strand break at the site of the removed base with both 3'- and 5'-phosphates. The chain is Formamidopyrimidine-DNA glycosylase from Cupriavidus metallidurans (strain ATCC 43123 / DSM 2839 / NBRC 102507 / CH34) (Ralstonia metallidurans).